The primary structure comprises 418 residues: Serine hydroxymethyltransferase (418 aa).

Residues leucine 121 and 125-127 (GHL) each bind (6S)-5,6,7,8-tetrahydrofolate. Position 230 is an N6-(pyridoxal phosphate)lysine (lysine 230). 355–357 (SPF) serves as a coordination point for (6S)-5,6,7,8-tetrahydrofolate.

It belongs to the SHMT family. As to quaternary structure, homodimer. Pyridoxal 5'-phosphate is required as a cofactor.

Its subcellular location is the cytoplasm. The catalysed reaction is (6R)-5,10-methylene-5,6,7,8-tetrahydrofolate + glycine + H2O = (6S)-5,6,7,8-tetrahydrofolate + L-serine. Its pathway is one-carbon metabolism; tetrahydrofolate interconversion. The protein operates within amino-acid biosynthesis; glycine biosynthesis; glycine from L-serine: step 1/1. Its function is as follows. Catalyzes the reversible interconversion of serine and glycine with tetrahydrofolate (THF) serving as the one-carbon carrier. This reaction serves as the major source of one-carbon groups required for the biosynthesis of purines, thymidylate, methionine, and other important biomolecules. Also exhibits THF-independent aldolase activity toward beta-hydroxyamino acids, producing glycine and aldehydes, via a retro-aldol mechanism. The sequence is that of Serine hydroxymethyltransferase from Streptococcus agalactiae serotype III (strain NEM316).